Consider the following 426-residue polypeptide: Histidine--tRNA ligase (426 aa).

Belongs to the class-II aminoacyl-tRNA synthetase family. As to quaternary structure, homodimer.

Its subcellular location is the cytoplasm. The catalysed reaction is tRNA(His) + L-histidine + ATP = L-histidyl-tRNA(His) + AMP + diphosphate + H(+). The sequence is that of Histidine--tRNA ligase from Streptococcus pyogenes serotype M28 (strain MGAS6180).